The sequence spans 102 residues: Acid shock protein (102 aa).

The first 21 residues, 1–21, serve as a signal peptide directing secretion; sequence MKKVLALVVAAAMGLSSAAFA. Low complexity predominate over residues 22–41; it reads AETATTPAPTATTTKAAPAK. Positions 22 to 58 are excised as a propeptide; sequence AETATTPAPTATTTKAAPAKTTHHKKQHKAAPAQKAQ. Positions 22–102 are disordered; that stretch reads AETATTPAPT…PAKPAAQPAA (81 aa). The span at 80-90 shows a compositional bias: basic residues; sequence AAKKHARKHSH. Low complexity predominate over residues 91–102; it reads QQPAKPAAQPAA.

Belongs to the Asr family. Proteolytic processing gives rise to the active protein.

The protein localises to the periplasm. Functionally, required for growth and/or survival at acidic conditions. In Escherichia coli O127:H6 (strain E2348/69 / EPEC), this protein is Acid shock protein.